The following is a 346-amino-acid chain: NADH-quinone oxidoreductase subunit H 2 (346 aa).

8 consecutive transmembrane segments (helical) span residues 14-34, 83-103, 136-156, 172-192, 208-228, 260-280, 289-309, and 324-344; these read IAMVLKVLVVFVFVLLTVAYA, FAFLIAPLIALVPAFIGFAVI, VGVLYILALASIGVYGIVLAG, SAQMISYELAAGLAIISVFML, GAWYAFKQPLAFILFFICSIA, FFMAEYANMVTVCAVTTTLFL, LPGWFWFIAKVYFLIFTCMWI, and LGWKVFLPLTLINIVVTGIIV.

It belongs to the complex I subunit 1 family. In terms of assembly, NDH-1 is composed of 14 different subunits. Subunits NuoA, H, J, K, L, M, N constitute the membrane sector of the complex.

The protein localises to the cell inner membrane. It catalyses the reaction a quinone + NADH + 5 H(+)(in) = a quinol + NAD(+) + 4 H(+)(out). Its function is as follows. NDH-1 shuttles electrons from NADH, via FMN and iron-sulfur (Fe-S) centers, to quinones in the respiratory chain. The immediate electron acceptor for the enzyme in this species is believed to be ubiquinone. Couples the redox reaction to proton translocation (for every two electrons transferred, four hydrogen ions are translocated across the cytoplasmic membrane), and thus conserves the redox energy in a proton gradient. This subunit may bind ubiquinone. This Geobacter metallireducens (strain ATCC 53774 / DSM 7210 / GS-15) protein is NADH-quinone oxidoreductase subunit H 2.